A 309-amino-acid polypeptide reads, in one-letter code: Homoserine O-succinyltransferase (309 aa).

Catalysis depends on C142, which acts as the Acyl-thioester intermediate. 2 residues coordinate substrate: K163 and S192. The active-site Proton acceptor is H235. The active site involves E237. R249 contacts substrate.

Belongs to the MetA family. Homodimer.

The protein localises to the cytoplasm. The catalysed reaction is L-homoserine + succinyl-CoA = O-succinyl-L-homoserine + CoA. It participates in amino-acid biosynthesis; L-methionine biosynthesis via de novo pathway; O-succinyl-L-homoserine from L-homoserine: step 1/1. Its function is as follows. Transfers a succinyl group from succinyl-CoA to L-homoserine, forming succinyl-L-homoserine. The polypeptide is Homoserine O-succinyltransferase (Escherichia coli (strain SE11)).